Here is a 572-residue protein sequence, read N- to C-terminus: MLLLWPLLFLQVSALRRTLFDRPKQLMQEGRVRLVGVIPSSGRVEVYHDGQWGTVCDDGWDLAEAQVVCRQLGFPGAVSVATGGQYGEGSGRVWLDDMNCKGSESLLSECSFKGWGVSDCTHKEDAGVICAPGKNTTSIRQMSVDNSLGLSDDLGLLFDSEDGCDFTIAVRDLSEEAELTFCVHRVILMIYPELNLTHDTRNITVDISQTCHTHVPRFLRYLYTRQIDVSTTSAQCLHQLAFIFGVQKLMEDVGRVFTALIPEDNTFQTQVSMYEYGVRTGDLVLQENVLQYLSWNCEFLISSPVWSTVSFDMMDALLQRSDLIVKDEAVLLEALERWIQDKGDQISSDKQVSLLNHIRFLLIPVDKLYDIQFSSSALRQSNEKLYLTGLLRGFQFNALPFSKIRDQVVKLSGNYIPRIYIGDEWSLGLNVSTVNNPHYNPYQYGYDQRYGQSNRIEKYLSTPAHPSAVYRGQMIQWQAQVFRSVQDCRNSGISCNSVPLVRFLATSSQYSYSSTIRYNNRLVLTCKNQNNVFHVQDFKNNMAVIPTNSSMGLPNPCPDDYSFRFVVRPQYI.

The first 14 residues, Met1–Ala14, serve as a signal peptide directing secretion. The 100-residue stretch at Val32–Ala131 folds into the SRCR domain. 3 disulfides stabilise this stretch: Cys56/Cys120, Cys69/Cys130, and Cys100/Cys110. N-linked (GlcNAc...) asparagine glycosylation is found at Asn135, Asn195, and Asn202. In terms of domain architecture, BTB spans Cys164–Thr231. One can recognise a BACK domain in the interval Gln270–Gln372. Residues Asn430 and Asn548 are each glycosylated (N-linked (GlcNAc...) asparagine).

Its subcellular location is the secreted. It localises to the extracellular space. The protein localises to the extracellular matrix. Its function is as follows. Promotes integrin-mediated cell adhesion. The protein is Galectin-3-binding protein B (lgals3bpb) of Danio rerio (Zebrafish).